The sequence spans 420 residues: MAFCGPRTAARLSHSTRALHYTHRGHVSQRTLNEVVIASAARTPIGSFQGSLSSLPATKLGSIAIKAAVERAGIPGDEVKEVYMGNVLQAGQGQAPSRQATLGAGLAISTPTTTINKVCASGMKSIMLAAQSLMCGHQQVMVAGGMESMSNVPYCMSRGATPYGGVKLEDIIVKDGLTDVYNKFHMGNCAENTAKKLSISREEQDSFAINSYTRSKAAWDSGLIANEIVSVTISQKGRPDIIVQEDEEYKRVDFSKFSKLKTVFQKDNGTVTAANASTLNDGAAALVLMTAGAASRLNVTPLARIVAFADAAVDPIDFPIAPAYAVPKLLSEAGLKKEDIAMWEINEAFSVVVLANVKMLDIDPARVNVNGGAVSLGHPIGMSGARIVGHMAHVLKKGQFGIAGICNGGGGASAVLIEKL.

The N-terminal 33 residues, 1-33, are a transit peptide targeting the mitochondrion; sequence MAFCGPRTAARLSHSTRALHYTHRGHVSQRTLN. Residue Cys-119 is the Acyl-thioester intermediate of the active site. Residues Tyr-212, 251–253, and Lys-256 contribute to the CoA site; that span reads RVD. K(+) is bound at residue Tyr-212. Residues Ala-273, Ala-274, and Ala-276 each coordinate K(+). A CoA-binding site is contributed by Ser-277. Position 374 (Val-374) interacts with K(+). The active-site Proton donor/acceptor is the Cys-406.

It belongs to the thiolase-like superfamily. Thiolase family. As to quaternary structure, homotetramer.

The protein localises to the mitochondrion. It carries out the reaction 2 acetyl-CoA = acetoacetyl-CoA + CoA. The enzyme catalyses propanoyl-CoA + acetyl-CoA = 2-methyl-3-oxobutanoyl-CoA + CoA. Its pathway is lipid metabolism; fatty acid beta-oxidation. Its function is as follows. This is one of the enzymes that catalyzes the last step of the mitochondrial beta-oxidation pathway, an aerobic process breaking down fatty acids into acetyl-CoA. Using free coenzyme A/CoA, catalyzes the thiolytic cleavage of medium- to long-chain 3-oxoacyl-CoAs into acetyl-CoA and a fatty acyl-CoA shortened by two carbon atoms. The activity of the enzyme is reversible and it can also catalyze the condensation of two acetyl-CoA molecules into acetoacetyl-CoA. Thereby, it plays a major role in ketone body metabolism. This chain is Acetyl-CoA acetyltransferase, mitochondrial (acat1), found in Xenopus tropicalis (Western clawed frog).